The sequence spans 136 residues: Protein NrdI (136 aa).

Belongs to the NrdI family.

Its function is as follows. Probably involved in ribonucleotide reductase function. This Klebsiella pneumoniae (strain 342) protein is Protein NrdI.